The chain runs to 159 residues: 3-hydroxyacyl-[acyl-carrier-protein] dehydratase FabZ (159 aa).

H58 is a catalytic residue.

This sequence belongs to the thioester dehydratase family. FabZ subfamily.

It is found in the cytoplasm. It carries out the reaction a (3R)-hydroxyacyl-[ACP] = a (2E)-enoyl-[ACP] + H2O. Involved in unsaturated fatty acids biosynthesis. Catalyzes the dehydration of short chain beta-hydroxyacyl-ACPs and long chain saturated and unsaturated beta-hydroxyacyl-ACPs. This Helicobacter pylori (strain J99 / ATCC 700824) (Campylobacter pylori J99) protein is 3-hydroxyacyl-[acyl-carrier-protein] dehydratase FabZ.